The following is a 314-amino-acid chain: MKKIVSLMSALVISVVSFAGISNAADSKKPIVIPTHNWSSQIVMAHVIGGIFESMGNNVKYVNTDSQAVYESIRLGDVSLSHEVWESAFGKSFTTALDKGGLVDWGDHEARTLEDMGYPNWVAEKGLCPGLPDWTALKNPACAKNFTTPDSGGKGRMLEGPQTWHGDLIPQRVDALGLGDLWTVKFAGSADALWAELVAAEKEGRGTIIFNWTPNFTDGAGFTFIDFPPYTAGCRPEDGGDGKCGSPDGYLKKAVNADFPKTHPAAAATFKKMSFSTSHIGAMAALVDVDKMTHEDAAKKWLADNKSVWTPFTK.

Residues 1-24 (MKKIVSLMSALVISVVSFAGISNA) form the signal peptide. The trimethylamine N-oxide site is built by Trp-38, Trp-85, Glu-114, Trp-164, and Trp-212.

The complex is probably composed of two ATP-binding proteins (TmoW), two transmembrane proteins (TmoV) and a solute-binding protein (TmoX).

The protein resides in the periplasm. In terms of biological role, part of the ABC transporter complex TmoXWV involved in trimethylamine N-oxide (TMAO) import. Possesses a high binding affinity toward TMAO, but presents little binding affinity toward betaine, carnitine, trimethylamine (TMA) or dimethylamine (DMA). The protein is Trimethylamine N-oxide-binding protein of Pelagibacter ubique (strain HTCC1062).